The primary structure comprises 397 residues: Tryptophan synthase beta chain (397 aa).

Position 86 is an N6-(pyridoxal phosphate)lysine (Lys86).

The protein belongs to the TrpB family. Tetramer of two alpha and two beta chains. Pyridoxal 5'-phosphate serves as cofactor.

It catalyses the reaction (1S,2R)-1-C-(indol-3-yl)glycerol 3-phosphate + L-serine = D-glyceraldehyde 3-phosphate + L-tryptophan + H2O. It functions in the pathway amino-acid biosynthesis; L-tryptophan biosynthesis; L-tryptophan from chorismate: step 5/5. In terms of biological role, the beta subunit is responsible for the synthesis of L-tryptophan from indole and L-serine. The protein is Tryptophan synthase beta chain of Aeromonas hydrophila subsp. hydrophila (strain ATCC 7966 / DSM 30187 / BCRC 13018 / CCUG 14551 / JCM 1027 / KCTC 2358 / NCIMB 9240 / NCTC 8049).